A 445-amino-acid chain; its full sequence is Phosphoglucosamine mutase 1 (445 aa).

Serine 102 serves as the catalytic Phosphoserine intermediate. Serine 102, aspartate 241, aspartate 243, and aspartate 245 together coordinate Mg(2+). The residue at position 102 (serine 102) is a Phosphoserine.

This sequence belongs to the phosphohexose mutase family. The cofactor is Mg(2+). Post-translationally, activated by phosphorylation.

It catalyses the reaction alpha-D-glucosamine 1-phosphate = D-glucosamine 6-phosphate. Its function is as follows. Catalyzes the conversion of glucosamine-6-phosphate to glucosamine-1-phosphate. The chain is Phosphoglucosamine mutase 1 from Shewanella sp. (strain MR-4).